We begin with the raw amino-acid sequence, 1036 residues long: Non-canonical non-ribosomal peptide synthetase FUB8 (1036 aa).

The segment at E21–E343 is adenylation (A) domain. A Carrier domain is found at T544–L621. S579 bears the O-(pantetheine 4'-phosphoryl)serine mark. Positions L658–I899 are thioester reductase (TR) domain.

Its pathway is mycotoxin biosynthesis. Non-canonical non-ribosomal peptide synthetase; part of the gene cluster that mediates the biosynthesis of fusaric acid, a mycotoxin with low to moderate toxicity to animals and humans, but with high phytotoxic properties. L-aspartate is suggested as fusaric acid amino acid precursor that is activated and further processed to O-acetyl-L-homoserine by cluster enzymes aspartate kinase FUB3 and homoserine O-acetyltransferase FUB5, as well as enzymes of the primary metabolism. The polyketide synthase (PKS) FUB1 generates the triketide trans-2-hexenal which is presumptively released by the hydrolase FUB4 and linked to the NRPS-bound amino acid precursor by NAD(P)-dependent dehydrogenase FUB6. FUB1, FUB4, and the non-canonical NRPS Fub8 may form an enzyme complex. Further processing of the NRPS-bound intermediate might be carried out by FUB6 and the sulfhydrylase FUB7, enabling a spontaneous electrocyclization to close the carbon backbone of fusaric acid. Dihydrofusaric acid is likely to be released via reduction by the thioester reductase (TR) domain of FUB8 whereupon the final oxidation to fusaric acid may (also) be performed by the FMN-dependent dehydrogenase FUB9. The sequence is that of Non-canonical non-ribosomal peptide synthetase FUB8 from Fusarium oxysporum f. sp. lycopersici (strain 4287 / CBS 123668 / FGSC 9935 / NRRL 34936) (Fusarium vascular wilt of tomato).